A 65-amino-acid chain; its full sequence is Sarcoplasmic/endoplasmic reticulum calcium ATPase regulator ARLN (65 aa).

The residue at position 1 (Met1) is an N-acetylmethionine. The disordered stretch occupies residues 1–38 (MEVGQAASGTDGVRERRGSSAARRRSQDEPVQSGMNGI). A phosphoserine mark is found at Ser19 and Ser26. A helical transmembrane segment spans residues 44–64 (WLDLWLFILFDLALFIFVYLL).

As to quaternary structure, homooligomer. Can also form heterooligomers with other sarcoplasmic/endoplasmic reticulum calcium ATPase (SERCA) regulators ERLN, PLN, SLN and STRIT1/DWORF. Monomer. Interacts as a monomer with ATP2A2/SERCA2; the interaction results in inhibition of ATP2A2 Ca(2+) affinity.

It is found in the endoplasmic reticulum membrane. Functionally, inhibits the activity of the calcium ATPases ATP2A2/SERCA2 and ATP2A3/SERCA3 by decreasing their apparent affinity for Ca(2+). The polypeptide is Sarcoplasmic/endoplasmic reticulum calcium ATPase regulator ARLN (Arln) (Rattus norvegicus (Rat)).